A 652-amino-acid polypeptide reads, in one-letter code: Protein phosphatase Slingshot homolog 3 (652 aa).

Polar residues predominate over residues 1 to 16; it reads MALVTVSRSPPASGHS. The disordered stretch occupies residues 1–31; the sequence is MALVTVSRSPPASGHSTPVGPTDRVIRRRGR. Position 2 is an N-acetylalanine (alanine 2). Residues serine 9, serine 37, serine 85, and serine 87 each carry the phosphoserine modification. Residues 43-91 are disordered; the sequence is GAVLGLQDGGEGNDAAEADPEPMEKPSGEEQPAEDQTDNGQGSQSPWKQ. A compositionally biased stretch (polar residues) spans 80–90; it reads DNGQGSQSPWK. The 56-residue stretch at 266–321 folds into the DEK-C domain; that stretch reads EQMEQAILAELWQVLDASDLDSVTSKEIRQALELRLGCPLQQYRDFIDNQMLLLMA. Residues 325–466 form the Tyrosine-protein phosphatase domain; the sequence is RASRIFPHLY…LQTYQGILTA (142 aa). Cysteine 410 functions as the Phosphocysteine intermediate in the catalytic mechanism. 3 disordered regions span residues 484 to 526, 540 to 580, and 610 to 652; these read EPLA…LGLR, LLEP…KGGQ, and RAFQ…EGKA. Residues 540–552 show a composition bias toward low complexity; sequence LLEPSSEPESTTE. A compositionally biased stretch (basic and acidic residues) spans 642–652; the sequence is SVDDSREEGKA.

Belongs to the protein-tyrosine phosphatase family. In terms of assembly, does not bind to, or colocalize with, filamentous actin.

It localises to the cytoplasm. The protein localises to the cytoskeleton. Its subcellular location is the nucleus. It carries out the reaction O-phospho-L-tyrosyl-[protein] + H2O = L-tyrosyl-[protein] + phosphate. It catalyses the reaction O-phospho-L-seryl-[protein] + H2O = L-seryl-[protein] + phosphate. The catalysed reaction is O-phospho-L-threonyl-[protein] + H2O = L-threonyl-[protein] + phosphate. Protein phosphatase which may play a role in the regulation of actin filament dynamics. Can dephosphorylate and activate the actin binding/depolymerizing factor cofilin, which subsequently binds to actin filaments and stimulates their disassembly. The polypeptide is Protein phosphatase Slingshot homolog 3 (Ssh3) (Rattus norvegicus (Rat)).